Reading from the N-terminus, the 134-residue chain is ATP synthase epsilon chain (134 aa).

Belongs to the ATPase epsilon chain family. In terms of assembly, F-type ATPases have 2 components, CF(1) - the catalytic core - and CF(0) - the membrane proton channel. CF(1) has five subunits: alpha(3), beta(3), gamma(1), delta(1), epsilon(1). CF(0) has three main subunits: a, b and c.

It is found in the cell inner membrane. Its function is as follows. Produces ATP from ADP in the presence of a proton gradient across the membrane. The chain is ATP synthase epsilon chain from Solibacter usitatus (strain Ellin6076).